The following is a 248-amino-acid chain: Aliphatic sulfonates import ATP-binding protein SsuB 2 (248 aa).

The region spanning 14–230 (VRVESLVRSF…DHGHRRFGEI (217 aa)) is the ABC transporter domain. An ATP-binding site is contributed by 46–53 (GRSGSGKS).

Belongs to the ABC transporter superfamily. Aliphatic sulfonates importer (TC 3.A.1.17.2) family. The complex is composed of two ATP-binding proteins (SsuB), two transmembrane proteins (SsuC) and a solute-binding protein (SsuA).

It is found in the cell inner membrane. It catalyses the reaction ATP + H2O + aliphatic sulfonate-[sulfonate-binding protein]Side 1 = ADP + phosphate + aliphatic sulfonateSide 2 + [sulfonate-binding protein]Side 1.. Functionally, part of the ABC transporter complex SsuABC involved in aliphatic sulfonates import. Responsible for energy coupling to the transport system. In Mesorhizobium japonicum (strain LMG 29417 / CECT 9101 / MAFF 303099) (Mesorhizobium loti (strain MAFF 303099)), this protein is Aliphatic sulfonates import ATP-binding protein SsuB 2.